Consider the following 426-residue polypeptide: Enolase (426 aa).

Position 163 (Q163) interacts with (2R)-2-phosphoglycerate. E205 acts as the Proton donor in catalysis. Residues D242, E286, and D313 each contribute to the Mg(2+) site. (2R)-2-phosphoglycerate is bound by residues K338, R367, S368, and K389. K338 acts as the Proton acceptor in catalysis.

This sequence belongs to the enolase family. Requires Mg(2+) as cofactor.

The protein resides in the cytoplasm. The protein localises to the secreted. It is found in the cell surface. The catalysed reaction is (2R)-2-phosphoglycerate = phosphoenolpyruvate + H2O. Its pathway is carbohydrate degradation; glycolysis; pyruvate from D-glyceraldehyde 3-phosphate: step 4/5. In terms of biological role, catalyzes the reversible conversion of 2-phosphoglycerate (2-PG) into phosphoenolpyruvate (PEP). It is essential for the degradation of carbohydrates via glycolysis. This chain is Enolase, found in Helicobacter pylori (strain G27).